The primary structure comprises 124 residues: KETAAAKFERQHMDSSTSSASSSNYCNQMMKSRDMTKDRCKPVNTFVHZSLABVZAVCSZKBVACKBGZTBCYZSYSTMSITBCRZTGSSKYPBCAYKTTZAZKHIIVACZGBPYVPVHFBASV.

Basic and acidic residues predominate over residues K1–M13. The tract at residues K1–Y25 is disordered. Residues K7 and R10 each coordinate substrate. The active-site Proton acceptor is the H12. Disulfide bonds link C26–C84, C40–C95, C58–C110, and C65–C72. Substrate-binding positions include K41–T45, K66, and R85. Residue H119 is the Proton donor of the active site.

This sequence belongs to the pancreatic ribonuclease family. As to quaternary structure, monomer. Interacts with and forms tight 1:1 complexes with RNH1. Dimerization of two such complexes may occur. Interaction with RNH1 inhibits this protein. Pancreas.

Its subcellular location is the secreted. The enzyme catalyses an [RNA] containing cytidine + H2O = an [RNA]-3'-cytidine-3'-phosphate + a 5'-hydroxy-ribonucleotide-3'-[RNA].. It carries out the reaction an [RNA] containing uridine + H2O = an [RNA]-3'-uridine-3'-phosphate + a 5'-hydroxy-ribonucleotide-3'-[RNA].. Endonuclease that catalyzes the cleavage of RNA on the 3' side of pyrimidine nucleotides. Acts on single-stranded and double-stranded RNA. This chain is Ribonuclease pancreatic (RNASE1), found in Tragelaphus oryx (Eland).